The primary structure comprises 410 residues: Lissencephaly-1 homolog (410 aa).

A LisH domain is found at 7-39 (QRDELNRAIADYLRSNGYEEAYSVFKKEAELDV). Positions 56 to 82 (TSVIRLQKKVMELESKLNEAKEEFTSG) form a coiled coil. WD repeat units follow at residues 106 to 147 (GHRS…RTLK), 148 to 187 (GHTD…CIRT), 190 to 229 (GHDH…CVKT), 232 to 271 (GHRE…CKAE), 274 to 333 (EHEH…CLMT), 336 to 377 (GHDN…KTLN), and 378 to 410 (AHEH…WECR).

It belongs to the WD repeat LIS1/nudF family. Can self-associate. Component of the cytosolic PAF-AH (I) heterotetrameric enzyme, which is composed of PAFAH1B1 (beta), PAFAH1B2 (alpha2) and PAFAH1B3 (alpha1) subunits. The catalytic activity of the enzyme resides in the alpha1 (PAFAH1B3) and alpha2 (PAFAH1B2) subunits, whereas the beta subunit (PAFAH1B1) has regulatory activity. Trimer formation is not essential for the catalytic activity. Interacts with dynein, dynactin, NDE1 and NDEL1.

It localises to the cytoplasm. The protein localises to the cytoskeleton. The protein resides in the microtubule organizing center. It is found in the centrosome. Regulatory subunit (beta subunit) of the cytosolic type I platelet-activating factor (PAF) acetylhydrolase (PAF-AH (I)), an enzyme that catalyzes the hydrolyze of the acetyl group at the sn-2 position of PAF and its analogs and participates in PAF inactivation. Regulates the PAF-AH (I) activity in a catalytic dimer composition-dependent manner. Positively regulates the activity of the minus-end directed microtubule motor protein dynein. May enhance dynein-mediated microtubule sliding by targeting dynein to the microtubule plus end. Required for several dynein- and microtubule-dependent processes such as the maintenance of Golgi integrity, the peripheral transport of microtubule fragments and the coupling of the nucleus and centrosome. May be required for proliferation of neuronal precursors and neuronal migration. In Gallus gallus (Chicken), this protein is Lissencephaly-1 homolog.